The chain runs to 264 residues: Carbonic anhydrase 7 (264 aa).

The 258-residue stretch at 5–262 (HCWGYGQDDG…LKGRVVKASF (258 aa)) folds into the Alpha-carbonic anhydrase domain. His66 functions as the Proton donor/acceptor in the catalytic mechanism. Zn(2+)-binding residues include His96, His98, and His121. 201–202 (TT) lines the substrate pocket.

Belongs to the alpha-carbonic anhydrase family. The cofactor is Zn(2+).

The protein resides in the cytoplasm. It carries out the reaction hydrogencarbonate + H(+) = CO2 + H2O. In terms of biological role, reversible hydration of carbon dioxide. The protein is Carbonic anhydrase 7 (Ca7) of Mus musculus (Mouse).